We begin with the raw amino-acid sequence, 133 residues long: Secretin (133 aa).

Residues 1–22 (MEPPLPTPMLLLLLLLLSSSAA) form the signal peptide. A propeptide spanning residues 23–30 (LPAPPRTP) is cleaved from the precursor. At Val-58 the chain carries Valine amide. A Phosphoserine modification is found at Ser-62. Positions 62-133 (SEQDTENIPE…EWTETTRPPR (72 aa)) are excised as a propeptide.

This sequence belongs to the glucagon family. In terms of tissue distribution, highly expressed in the intestine. Also expressed in the hippocampus, cerebellum and the brain stem in adult mouse brain. In the hippocampus, expressed in the dentate gyrus, the hilus and the molecular layer.

Its subcellular location is the secreted. Functionally, hormone involved in different processes, such as regulation of the pH of the duodenal content, food intake and water homeostasis. Exerts its biological effects by binding to secretin receptor (SCTR), a G-protein coupled receptor expressed in the basolateral domain of several cells. Acts as a key gastrointestinal hormone by regulating the pH of the duodenal content. Secreted by S cells of the duodenum in the crypts of Lieberkuehn and regulates the pH of the duodenum by (1) inhibiting the secretion of gastric acid from the parietal cells of the stomach and (2) stimulating the production of bicarbonate (NaHCO(3)) from the ductal cells of the pancreas. Production of bicarbonate is essential to neutralize the pH and ensure no damage is done to the small intestine by the gastric acid. In addition to regulating the pH of the duodenal content, plays a central role in diet induced thermogenesis: acts as a non-sympathetic brown fat (BAT) activator mediating prandial thermogenesis, which consequentially induces satiation. Mechanistically, secretin released by the gut after a meal binds to secretin receptor (SCTR) in brown adipocytes, activating brown fat thermogenesis by stimulating lipolysis, which is sensed in the brain and promotes satiation. Also able to stimulate lipolysis in white adipocytes. Also plays an important role in cellular osmoregulation: released into the systemic circulation in response to hyperosmolality and acts at different levels in the hypothalamus, pituitary and kidney to regulate water homeostasis. Also plays a role in the central nervous system, possibly by acting as a neuropeptide hormone: required for hippocampal synaptic function and neural progenitor cells maintenance. The chain is Secretin from Mus musculus (Mouse).